Here is a 148-residue protein sequence, read N- to C-terminus: Sec-independent protein translocase protein TatB (148 aa).

Residues 1–21 traverse the membrane as a helical segment; it reads MFGISFSELLLVGLVALLVLG. The disordered stretch occupies residues 85–148; it reads EPTPVEHVGE…NDTTQPPRAP (64 aa). Residues 107 to 148 show a composition bias toward low complexity; it reads APAVAPTESAPVVAPASVEHVAQTAAPTTPAPNDTTQPPRAP.

The protein belongs to the TatB family. As to quaternary structure, the Tat system comprises two distinct complexes: a TatABC complex, containing multiple copies of TatA, TatB and TatC subunits, and a separate TatA complex, containing only TatA subunits. Substrates initially bind to the TatABC complex, which probably triggers association of the separate TatA complex to form the active translocon.

It localises to the cell inner membrane. Part of the twin-arginine translocation (Tat) system that transports large folded proteins containing a characteristic twin-arginine motif in their signal peptide across membranes. Together with TatC, TatB is part of a receptor directly interacting with Tat signal peptides. TatB may form an oligomeric binding site that transiently accommodates folded Tat precursor proteins before their translocation. This chain is Sec-independent protein translocase protein TatB, found in Pseudomonas fluorescens (strain Pf0-1).